Reading from the N-terminus, the 1079-residue chain is Extracellular calcium-sensing receptor (1079 aa).

An N-terminal signal peptide occupies residues 1 to 19; it reads MAWFGYCLALLALTWHSSA. The Extracellular segment spans residues 20–610; it reads YGPDQRAQKK…KEIEFLAWTE (591 aa). The interval 22–188 is ligand-binding 1 (LB1); the sequence is PDQRAQKKGD…QFKSFLRTIP (167 aa). Cys-60 and Cys-101 are disulfide-bonded. A phosphate-binding site is contributed by 66 to 70; sequence RGFRW. Residues Ile-81, Ser-84, Leu-87, and Leu-88 each contribute to the Ca(2+) site. Asn-90 carries an N-linked (GlcNAc...) asparagine glycan. Thr-100 contributes to the Ca(2+) binding site. N-linked (GlcNAc...) asparagine glycosylation occurs at Asn-130. Thr-145 lines the Ca(2+) pocket. L-tryptophan is bound by residues Ser-147, Ala-168, and Ser-170. Ca(2+) contacts are provided by Ser-170, Pro-188, Asp-190, Glu-231, and Asp-234. The segment at 189–324 is ligand-binding 2 (LB2); that stretch reads NDEHQATAMA…GGTIGFGLKA (136 aa). Cystine bridges form between Cys-236/Cys-561, Cys-358/Cys-395, Cys-437/Cys-449, Cys-542/Cys-562, Cys-546/Cys-565, Cys-568/Cys-582, and Cys-585/Cys-598. Residues Asp-238 and Ser-240 each contribute to the spermine site. N-linked (GlcNAc...) asparagine glycosylation is found at Asn-261 and Asn-287. Glu-297 serves as a coordination point for Ca(2+). Residue Glu-297 coordinates L-tryptophan. Asn-386 carries an N-linked (GlcNAc...) asparagine glycan. Residue 415–417 coordinates phosphate; it reads RIS. N-linked (GlcNAc...) asparagine glycans are attached at residues Asn-446, Asn-468, and Asn-488. Tyr-489 is a binding site for Ca(2+). Asn-541 carries an N-linked (GlcNAc...) asparagine glycan. The cysteine-rich (CR) stretch occupies residues 542-612; it reads CSRDCQAGTR…IEFLAWTEPF (71 aa). A Ca(2+)-binding site is contributed by Gly-557. Asn-594 is a glycosylation site (N-linked (GlcNAc...) asparagine). The helical transmembrane segment at 611 to 636 threads the bilayer; the sequence is PFGIALTLFAVLGIFLTAFVLGVFIK. The Cytoplasmic segment spans residues 637–648; it reads FRNTPIVKATNR. The interval 637-648 is intracellular loop 1 (ICL1); that stretch reads FRNTPIVKATNR. A helical transmembrane segment spans residues 649-668; the sequence is ELSYLLLFSLLCCFSSSLFF. At 669 to 674 the chain is on the extracellular side; the sequence is IGEPQD. A helical membrane pass occupies residues 675 to 698; sequence WTCRLRQPAFGISFVLCISCILVK. The Cytoplasmic segment spans residues 699–722; the sequence is TNRVLLVFEAKIPTSFHRKWWGLN. Positions 699–722 are intracellular loop 2 (ICL2); it reads TNRVLLVFEAKIPTSFHRKWWGLN. Residues 723–745 traverse the membrane as a helical segment; it reads LQFLLVFLCTFMQIVICIIWLYT. Topologically, residues 746-769 are extracellular; that stretch reads APPSSYRNHELEDEIIFITCHEGS. The chain crosses the membrane as a helical span at residues 770-789; it reads LMALGSLIGYTCLLAAICFF. Residues 790-805 lie on the Cytoplasmic side of the membrane; that stretch reads FAFKSRKLPENFNEAK. The interval 790–805 is intracellular loop 3 (ICL3); it reads FAFKSRKLPENFNEAK. A helical transmembrane segment spans residues 806 to 828; sequence FITFSMLIFFIVWISFIPAYAST. Residues 829–832 are Extracellular-facing; that stretch reads YGKF. Residues 833-854 form a helical membrane-spanning segment; that stretch reads VSAVEVIAILAASFGLLACIFF. Residues 855 to 1079 lie on the Cytoplasmic side of the membrane; it reads NKVYIILFKP…SSVTENILHS (225 aa). The tract at residues 855 to 1079 is C-terminus; that stretch reads NKVYIILFKP…SSVTENILHS (225 aa). Residues 880–900 are interaction with RNF19A; that stretch reads AFKVAARATLRRPNISRKRSS. Thr-888 is modified (phosphothreonine). The interval 890–898 is arginine-rich retention motif; the sequence is RRPNISRKR. The segment at 894 to 964 is disordered; it reads ISRKRSSSLG…QQQPQQPRCK (71 aa). A Phosphoserine modification is found at Ser-899. Residues 900-918 are compositionally biased toward low complexity; sequence SSLGGSTGSIPSSSISSKS. Basic and acidic residues predominate over residues 919-931; that stretch reads NSEDRFPQPERQK. Ser-920 is modified (phosphoserine). Residues 932-961 show a composition bias toward low complexity; it reads QQQPLALTQQEQQQQPLTLQPQQQQQPQQP. Ser-1062 is modified (phosphoserine).

The protein belongs to the G-protein coupled receptor 3 family. In terms of assembly, homodimer; disulfide-linked. Interacts with VCP. Interacts with ARRB1. Phosphorylation at Thr-888 by PKC impairs coupling with G(q)/G(11) G-proteins, while it does not affect G(i)/G(o)-coupling. Phosphorylation at Ser-899 by PKA promote plasma membrane localization. Post-translationally, ubiquitinated by RNF19A; which induces proteasomal degradation. Epidermis, kidney and cartilage.

The protein localises to the cell membrane. With respect to regulation, in resting state, adopts an open conformation, anion-binding promoting the inactive configuration. Upon aromatic amino acid-binding, the groove in the extracellular venus flytrap module is closed, thereby inducing the formation of a novel homodimer interface between subunits. Calcium ions stabilize the active state by enhancing homodimer interactions between membrane-proximal domains to fully activate the receptor. Upon activation, the homodimer adopts an asymmetric configuration of the 7-transmembrane region that primes one protomer for G-protein coupling. G-protein binding expands the transmembrane dimer interface; the restriction imposed by the receptor dimer, in combination with intracellular loop 2 (ICL2), enables G-protein activation by facilitating conformational transition of G-protein alpha. Coupling to different classes of G-proteins results in distinct CASR-G-protein interfaces. In terms of biological role, G-protein-coupled receptor that senses changes in the extracellular concentration of calcium ions and plays a key role in maintaining calcium homeostasis. Senses fluctuations in the circulating calcium concentration: activated by elevated circulating calcium, leading to decreased parathyroid hormone (PTH) secretion in parathyroid glands. In kidneys, acts as a key regulator of renal tubular calcium resorption. Ligand binding causes a conformation change that triggers signaling via guanine nucleotide-binding proteins (G-proteins) and modulates the activity of downstream effectors. CASR is coupled with different G(q)/G(11), G(i)/G(o)- or G(s)-classes of G-proteins depending on the context. In the parathyroid and kidney, CASR signals through G(q)/G(11) and G(i)/G(o) G-proteins: G(q)/G(11) coupling activates phospholipase C-beta, releasing diacylglycerol (DAG) and inositol 1,4,5-trisphosphate (IP3) second messengers, while G(i)/G(o) coupling mediates inhibition of adenylate cyclase activity. The G-protein-coupled receptor activity is activated by a co-agonist mechanism: aromatic amino acids, such as Trp or Phe, act concertedly with divalent cations, such as calcium or magnesium, to achieve full receptor activation. Acts as an activator of the NLRP3 inflammasome via G(i)/G(o)-mediated signaling: down-regulation of cyclic AMP (cAMP) relieving NLRP3 inhibition by cAMP. Acts as a regulator of proton-sensing receptor GPR68 in a seesaw manner: CASR-mediated signaling inhibits GPR68 signaling in response to extracellular calcium, while GPR68 inhibits CASR in presence of extracellular protons. The chain is Extracellular calcium-sensing receptor from Mus musculus (Mouse).